Here is a 259-residue protein sequence, read N- to C-terminus: E3 ubiquitin-protein ligase RNF170 (259 aa).

The Lumenal segment spans residues 1-25 (MAKYQGEVQSLKLDDDSVIEGVSDQ). Residues 26–46 (VLVAVVVSLALIATLVYALFS) traverse the membrane as a helical segment. At 47-202 (RNAHQNIHPE…GGLFWMFRIR (156 aa)) the chain is on the cytoplasmic side. The RING-type zinc finger occupies 88-131 (CPICLHQASLPVETNCGHLFCGTCIVAYWRYGSWLGAISCPICR). A helical membrane pass occupies residues 203–223 (IILCLMGAFFYLISPLDFVPE). Alanine 224 is a topological domain (lumenal). Residues 225 to 245 (LFGILGFLDDFFVIFLLLIYI) traverse the membrane as a helical segment. Topologically, residues 246–259 (SIMYREVITQRLNR) are cytoplasmic.

Constitutively associated with the ERLIN1/ERLIN 2 complex. Interacts with activated ITPR1.

The protein resides in the endoplasmic reticulum membrane. It carries out the reaction S-ubiquitinyl-[E2 ubiquitin-conjugating enzyme]-L-cysteine + [acceptor protein]-L-lysine = [E2 ubiquitin-conjugating enzyme]-L-cysteine + N(6)-ubiquitinyl-[acceptor protein]-L-lysine.. It functions in the pathway protein modification; protein ubiquitination. Its function is as follows. E3 ubiquitin-protein ligase. Plays an essential role in stimulus-induced inositol 1,4,5-trisphosphate receptor type 1 (ITPR1) ubiquitination and degradation via the endoplasmic reticulum-associated degradation (ERAD) pathway. Also involved in ITPR1 turnover in resting cells. Selectively inhibits the TLR3-triggered innate immune response by promoting the 'Lys-48'-linked polyubiquitination and degradation of TLR3. The chain is E3 ubiquitin-protein ligase RNF170 (RNF170) from Bos taurus (Bovine).